Reading from the N-terminus, the 40-residue chain is Cytochrome c3 hydrogenase small chain (40 aa).

The cofactor is Fe cation.

The catalysed reaction is 2 Fe(III)-[cytochrome c3] + H2 = 2 Fe(II)-[cytochrome c3] + 2 H(+). The polypeptide is Cytochrome c3 hydrogenase small chain (hoxK) (Acidithiobacillus ferrooxidans (Thiobacillus ferrooxidans)).